The following is a 190-amino-acid chain: MAYIAKSFYDLSAIGLDGEKIDFNTFRGRAVLIENVASLUGTTTRDYTQLNELQCRFPRRLVVLGFPCNQFGHQENCQNEEILNSLKYVRHGGGFQPTFSLTQKCDVNGQNQHPVFAYLKDKLPYPYDDPFSLMTDPKLIIWSPVRRSDVSWNFEKFLIGPEGEPFRRYSRTFQTINIEPDIKRLLKVAI.

Selenocysteine 40 is an active-site residue. Residue selenocysteine 40 is a non-standard amino acid, selenocysteine.

This sequence belongs to the glutathione peroxidase family. In terms of assembly, homotetramer. Mucosal epithelium of the gastrointestinal tract.

It is found in the cytoplasm. Its subcellular location is the cytosol. It catalyses the reaction 2 glutathione + H2O2 = glutathione disulfide + 2 H2O. The enzyme catalyses a hydroperoxy polyunsaturated fatty acid + 2 glutathione = a hydroxy polyunsaturated fatty acid + glutathione disulfide + H2O. The catalysed reaction is tert-butyl hydroperoxide + 2 glutathione = tert-butanol + glutathione disulfide + H2O. It carries out the reaction cumene hydroperoxide + 2 glutathione = 2-phenylpropan-2-ol + glutathione disulfide + H2O. It catalyses the reaction (13S)-hydroperoxy-(9Z,11E)-octadecadienoate + 2 glutathione = (13S)-hydroxy-(9Z,11E)-octadecadienoate + glutathione disulfide + H2O. The enzyme catalyses (5S)-hydroperoxy-(6E,8Z,11Z,14Z)-eicosatetraenoate + 2 glutathione = (5S)-hydroxy-(6E,8Z,11Z,14Z)-eicosatetraenoate + glutathione disulfide + H2O. The catalysed reaction is (12R)-hydroperoxy-(5Z,8Z,10E,14Z)-eicosatetraenoate + 2 glutathione = (12R)-hydroxy-(5Z,8Z,10E,14Z)-eicosatetraenoate + glutathione disulfide + H2O. It carries out the reaction (15S)-hydroperoxy-(5Z,8Z,11Z,13E)-eicosatetraenoate + 2 glutathione = (15S)-hydroxy-(5Z,8Z,11Z,13E)-eicosatetraenoate + glutathione disulfide + H2O. Catalyzes the reduction of hydroperoxides in a glutathione-dependent manner thus regulating cellular redox homeostasis. Can reduce small soluble hydroperoxide such as H2O2. Can reduce cumene hydroperoxide and tert-butyl hydroperoxide, as well as several fatty acid-derived hydroperoxides. Cannot reduce phosphatidycholine hydroperoxide. This Rattus norvegicus (Rat) protein is Glutathione peroxidase 2 (Gpx2).